We begin with the raw amino-acid sequence, 173 residues long: Alpha-crystallin A chain (173 aa).

Met1 bears the N-acetylmethionine mark. The required for complex formation with BFSP1 and BFSP2; during homooligomerization, mediates the association of 2 dimers to form a tetramer stretch occupies residues 1–63 (MDVTIQHPWF…RTVLDSGISE (63 aa)). Gln6 bears the Deamidated glutamine; partial mark. Residue Ser45 is modified to Phosphoserine. Gln50 is subject to Deamidated glutamine; partial. One can recognise a sHSP domain in the interval 52 to 164 (LFRTVLDSGI…AERAIPVSRE (113 aa)). N6-acetyllysine is present on Lys70. Position 90 is a deamidated glutamine; partial (Gln90). Position 99 is an N6-acetyllysine (Lys99). Position 100 (His100) interacts with Zn(2+). The residue at position 101 (Asn101) is a Deamidated asparagine; partial. Zn(2+) contacts are provided by Glu102 and His107. Ser122 carries the phosphoserine modification. Asn123 is modified (deamidated asparagine; partial). A disulfide bond links Cys131 and Cys142. Gln147 carries the deamidated glutamine; partial modification. Position 154 (His154) interacts with Zn(2+). Ser162 carries an O-linked (GlcNAc) serine glycan.

It belongs to the small heat shock protein (HSP20) family. Heteropolymer composed of three CRYAA and one CRYAB subunits. Inter-subunit bridging via zinc ions enhances stability, which is crucial as there is no protein turn over in the lens. Can also form homodimers and homotetramers (dimers of dimers) which serve as the building blocks of homooligomers. Within homooligomers, the zinc-binding motif is created from residues of 3 different molecules. His-100 and Glu-102 from one molecule are ligands of the zinc ion, and His-107 and His-154 residues from additional molecules complete the site with tetrahedral coordination geometry. Part of a complex required for lens intermediate filament formation composed of BFSP1, BFSP2 and CRYAA. In terms of processing, O-glycosylated; contains N-acetylglucosamine side chains. Post-translationally, deamidation of Asn-101 in lens occurs mostly during the first 30 years of age, followed by a small additional amount of deamidation (approximately 5%) during the next approximately 38 years, resulting in a maximum of approximately 50% deamidation during the lifetime of the individual. Phosphorylation on Ser-122 seems to be developmentally regulated. Absent in the first months of life, it appears during the first 12 years of human lifetime. The relative amount of phosphorylated form versus unphosphorylated form does not change over the lifetime of the individual. In terms of processing, acetylation at Lys-70 may increase chaperone activity. Post-translationally, undergoes age-dependent proteolytical cleavage at the C-terminus. Alpha-crystallin A(1-172) is the most predominant form produced most rapidly during the first 12 years of age and after this age is present in approximately 50% of the lens molecules. In young individuals and during the first approximately 30 years of life, less than half molecules contain an intramolecular disulfide bond (oxidized form), while in the remaining fraction the cysteines are in the free sulfhydryl form (reduced form). With aging, the amount of oxidized form increases up to 90% and it becomes a major constituent of high molecular weight aggregates, concomitant with an age-dependent loss of its chaperone activity. The reduced form is undetectable in cataractous lenses. As to expression, expressed in the eye lens (at protein level).

The protein localises to the cytoplasm. It is found in the nucleus. In terms of biological role, contributes to the transparency and refractive index of the lens. In its oxidized form (absence of intramolecular disulfide bond), acts as a chaperone, preventing aggregation of various proteins under a wide range of stress conditions. Required for the correct formation of lens intermediate filaments as part of a complex composed of BFSP1, BFSP2 and CRYAA. This chain is Alpha-crystallin A chain (CRYAA), found in Homo sapiens (Human).